Consider the following 198-residue polypeptide: Recombination protein RecR (198 aa).

Residues 56–71 form a C4-type zinc finger; sequence CTTCGNIDTHDPCAIC. Residues 79–174 form the Toprim domain; that stretch reads RSLCVVEEVS…RLTQLAHGLP (96 aa).

It belongs to the RecR family.

Functionally, may play a role in DNA repair. It seems to be involved in an RecBC-independent recombinational process of DNA repair. It may act with RecF and RecO. This chain is Recombination protein RecR, found in Sphingopyxis alaskensis (strain DSM 13593 / LMG 18877 / RB2256) (Sphingomonas alaskensis).